A 359-amino-acid chain; its full sequence is Putative nucleotidyltransferase MAB21L1 (359 aa).

Residues 23-24 and 63-66 contribute to the a ribonucleoside 5'-triphosphate site; these read RK and YEGL. Glu-73 and Glu-75 together coordinate Mg(2+). Residues Lys-248 and 252–255 contribute to the a ribonucleoside 5'-triphosphate site; that span reads SILK.

It belongs to the mab-21 family. As to quaternary structure, monomer. Homodecamer; composed of 2 back to back homopentamers. The protein may exist as monomer in solution and oiligomerizes upon ligand binding.

It is found in the nucleus. Its function is as follows. Putative nucleotidyltransferase required for several aspects of embryonic development including normal development of the eye. It is unclear whether it displays nucleotidyltransferase activity in vivo. Binds single-stranded RNA (ssRNA). The sequence is that of Putative nucleotidyltransferase MAB21L1 (MAB21L1) from Bos taurus (Bovine).